We begin with the raw amino-acid sequence, 38 residues long: Photosystem II reaction center protein L (38 aa).

A helical membrane pass occupies residues 17-37; it reads SLYWGLLLIXVLAVLFSNYFF.

It belongs to the PsbL family. As to quaternary structure, PSII is composed of 1 copy each of membrane proteins PsbA, PsbB, PsbC, PsbD, PsbE, PsbF, PsbH, PsbI, PsbJ, PsbK, PsbL, PsbM, PsbT, PsbX, PsbY, PsbZ, Psb30/Ycf12, at least 3 peripheral proteins of the oxygen-evolving complex and a large number of cofactors. It forms dimeric complexes.

It localises to the plastid. Its subcellular location is the chloroplast thylakoid membrane. One of the components of the core complex of photosystem II (PSII). PSII is a light-driven water:plastoquinone oxidoreductase that uses light energy to abstract electrons from H(2)O, generating O(2) and a proton gradient subsequently used for ATP formation. It consists of a core antenna complex that captures photons, and an electron transfer chain that converts photonic excitation into a charge separation. This subunit is found at the monomer-monomer interface and is required for correct PSII assembly and/or dimerization. This chain is Photosystem II reaction center protein L, found in Allium textile (Textile onion).